A 381-amino-acid polypeptide reads, in one-letter code: ELMO domain-containing protein 3 (381 aa).

Basic and acidic residues predominate over residues 1–17; that stretch reads MNENFHSFHEKELRDGQ. The segment at 1-31 is disordered; it reads MNENFHSFHEKELRDGQVESVSAGSSPPCDK. The ELMO domain occupies 170-324; sequence MHGRVLQTIY…DLEMSAKKSP (155 aa).

The protein localises to the cell projection. It is found in the stereocilium. The protein resides in the kinocilium. Its subcellular location is the cytoplasm. It localises to the cytoskeleton. In terms of biological role, acts as a GTPase-activating protein (GAP) for ARL2 with low specific activity. The protein is ELMO domain-containing protein 3 (ELMOD3) of Bos taurus (Bovine).